We begin with the raw amino-acid sequence, 513 residues long: Ribonuclease Y (513 aa).

A helical membrane pass occupies residues 4–24; it reads NTAIIIAITTGFVAFIGGYFL. The 64-residue stretch at 203–266 folds into the KH domain; the sequence is TVAVIPLPNE…ETARMALEKL (64 aa). One can recognise an HD domain in the interval 329–422; the sequence is VLKHSVEVAY…IQAADAISAA (94 aa).

Belongs to the RNase Y family.

Its subcellular location is the cell membrane. Endoribonuclease that initiates mRNA decay. This is Ribonuclease Y from Desulforudis audaxviator (strain MP104C).